We begin with the raw amino-acid sequence, 74 residues long: Brevinin-2Ef (74 aa).

The signal sequence occupies residues 1-22 (MFTMKKSLLLIFFLGTISLSLC). Positions 23 to 41 (QEERNADDDDGEMTEEEKR) are excised as a propeptide. C68 and C74 are oxidised to a cystine.

The protein belongs to the frog skin active peptide (FSAP) family. Brevinin subfamily. Expressed by the skin glands.

Its subcellular location is the secreted. In terms of biological role, shows antibacterial activity against representative Gram-negative and Gram-positive bacterial species, and hemolytic activity. This is Brevinin-2Ef from Pelophylax lessonae (Pool frog).